Consider the following 373-residue polypeptide: 3 beta-hydroxysteroid dehydrogenase/Delta 5--&gt;4-isomerase (373 aa).

Tyrosine 155 functions as the Proton acceptor in the catalytic mechanism. Lysine 159 serves as a coordination point for NAD(+). A helical membrane pass occupies residues 288-308 (ISLQYWLAFLLEIVSFLLSPI).

It belongs to the 3-beta-HSD family.

It is found in the endoplasmic reticulum membrane. It localises to the mitochondrion membrane. The catalysed reaction is a 3beta-hydroxy-Delta(5)-steroid + NAD(+) = a 3-oxo-Delta(5)-steroid + NADH + H(+). It catalyses the reaction a 3-oxo-Delta(5)-steroid = a 3-oxo-Delta(4)-steroid. It participates in lipid metabolism; steroid biosynthesis. Its function is as follows. 3-beta-HSD is a bifunctional enzyme, that catalyzes the oxidative conversion of Delta(5)-ene-3-beta-hydroxy steroid, and the oxidative conversion of ketosteroids. The 3-beta-HSD enzymatic system plays a crucial role in the biosynthesis of all classes of hormonal steroids. This Bos taurus (Bovine) protein is 3 beta-hydroxysteroid dehydrogenase/Delta 5--&gt;4-isomerase (HSD3B).